The chain runs to 182 residues: Endoribonuclease YbeY (182 aa).

The Zn(2+) site is built by His115, His119, and His125.

This sequence belongs to the endoribonuclease YbeY family. Zn(2+) serves as cofactor.

The protein resides in the cytoplasm. Functionally, single strand-specific metallo-endoribonuclease involved in late-stage 70S ribosome quality control and in maturation of the 3' terminus of the 16S rRNA. The chain is Endoribonuclease YbeY from Bifidobacterium longum subsp. infantis (strain ATCC 15697 / DSM 20088 / JCM 1222 / NCTC 11817 / S12).